A 236-amino-acid chain; its full sequence is UPF0173 metal-dependent hydrolase DSY1309 (236 aa).

The protein belongs to the UPF0173 family.

In Desulfitobacterium hafniense (strain Y51), this protein is UPF0173 metal-dependent hydrolase DSY1309.